The following is a 317-amino-acid chain: D-alanine--D-alanine ligase (317 aa).

Residues Lys103–Glu299 form the ATP-grasp domain. Lys130 to His183 lines the ATP pocket. Residues Asp251, Glu265, and Asn267 each contribute to the Mg(2+) site.

It belongs to the D-alanine--D-alanine ligase family. It depends on Mg(2+) as a cofactor. The cofactor is Mn(2+).

The protein localises to the cytoplasm. The catalysed reaction is 2 D-alanine + ATP = D-alanyl-D-alanine + ADP + phosphate + H(+). Its pathway is cell wall biogenesis; peptidoglycan biosynthesis. Its function is as follows. Cell wall formation. This is D-alanine--D-alanine ligase from Wolbachia sp. subsp. Drosophila simulans (strain wRi).